The chain runs to 162 residues: Large ribosomal subunit protein bL17 (162 aa).

Positions 118 to 162 (RAPAAAPEAEEKGEKKAAGKAEKAPKAAKAPKAEKKPAKKAAKAE) are disordered. Basic and acidic residues predominate over residues 126–162 (AEEKGEKKAAGKAEKAPKAAKAPKAEKKPAKKAAKAE).

The protein belongs to the bacterial ribosomal protein bL17 family. As to quaternary structure, part of the 50S ribosomal subunit. Contacts protein L32.

The sequence is that of Large ribosomal subunit protein bL17 from Anaeromyxobacter dehalogenans (strain 2CP-C).